Consider the following 396-residue polypeptide: Putative glycosyltransferase HOC1 (396 aa).

Topologically, residues 2-13 are cytoplasmic; it reads AKTTKRASSFRR. A helical; Signal-anchor for type II membrane protein membrane pass occupies residues 14-34; sequence LMIFAIIALISLAFGVRYLFH. Over 35-396 the chain is Lumenal; sequence NSNATDLQKI…WKNTPKVEQK (362 aa). N-linked (GlcNAc...) asparagine glycosylation is present at Asn37.

This sequence belongs to the glycosyltransferase 32 family. In terms of assembly, component of the M-Pol II complex composed of ANP1, MNN9, MNN10, MNN11 and HOC1.

It localises to the golgi apparatus. Its subcellular location is the cis-Golgi network membrane. In terms of biological role, the M-Pol II complex possesses alpha-1,6-mannosyltransferase activity and is probably involved in the elongation of the mannan backbone of N-linked glycans on cell wall and periplasmic proteins. The protein is Putative glycosyltransferase HOC1 (HOC1) of Saccharomyces cerevisiae (strain ATCC 204508 / S288c) (Baker's yeast).